Consider the following 328-residue polypeptide: Phosphate acetyltransferase (328 aa).

This sequence belongs to the phosphate acetyltransferase and butyryltransferase family.

It localises to the cytoplasm. It catalyses the reaction acetyl-CoA + phosphate = acetyl phosphate + CoA. The protein operates within metabolic intermediate biosynthesis; acetyl-CoA biosynthesis; acetyl-CoA from acetate: step 2/2. The polypeptide is Phosphate acetyltransferase (pta) (Thermoanaerobacterium thermosaccharolyticum (strain ATCC 7956 / DSM 571 / NCIMB 9385 / NCA 3814 / NCTC 13789 / WDCM 00135 / 2032) (Clostridium thermosaccharolyticum)).